The chain runs to 1912 residues: MVPVARPLSLLLTFFLCACAETPPRFTRTPVDQTGVSGGVASFICQATGDPRPKIVWNKKGKKVSNQRFEVIEFDDGSGSVLRIQPLRTPRDEAIYECVASNNVGEISVSTRLTVLREDQIPRGFPTIDMGPQLKVVERTRTATMLCAASGNPDPEITWFKDFLPVDTSNNNGRIKQLRSESIGGTPIRGALQIEQSEESDQGKYECVATNSAGTRYSAPANLYVRELREVRRVPPRFSIPPTNHEIMPGGSVNITCVAVGSPMPYVKWMLGAEDLTPEDDMPIGRNVLELNDVRQSANYTCVAMSTLGVIEAIAQITVKALPKPPGTPVVTESTATSITLTWDSGNPEPVSYYIIQHKPKNSEEPYKEIDGIATTRYSVAGLSPYSDYEFRVVAVNNIGRGPASEPVLTQTSEQAPSSAPRDVQARMLSSTTILVQWKEPEEPNGQIQGYRVYYTMDPTQHVNNWMKHNVADSQITTIGNLVPQKTYSVKVLAFTSIGDGPLSSDIQVITQTGVPGQPLNFKAEPESETSILLSWTPPRSDTIASYELVYRDGDQGEEQRITIEPGTSYRLQGLKPNSLYYFRLSARSPQGLGASTAEISARTMQSKPSAPPQDISCTSPSSTSILVSWQPPPVEKQNGIITEYSLKYAAVDGEDFKPHEILGIPSDTTKYLLEQLEKWTEYRITVTAHTDVGPGPESLSVLIRTDEDVPSGPPRKVEVEAVNATAVKVSWRSPVPNKQHGQIRGYQVHYVKMENGEPKGQPMLKDVMLADAQWEFDDTTEHDMIISGLQPETSYSLTVTAYTTKGDGARSKPKLVSTTGAVPGKPRLVINHTQMNTALIQWHPPVDTFGPLQGYRLKFGRKDMEPLTTLEFSEKEDHFTATDIHKGASYVFRLSARNKVGFGEEMVKEISVPEEIPTGFPQNLHSEGTTSTSVQLSWQPPVLAERNGVITKYTLLYRDINVPLLPMEHLIVPADTSMTLTGLKSDTTYDVKVRAHTSKGPGPYSPSVQFRTLPVDQVFAKNFHVKAVMKTSVLLSWEIPENYNSAMPFKILYDDGKMVEEVDGRATQKLIVNLKPEKSYSFVLTNRGNSAGGLQHRVTAKTAPDVLRTKPAFIGKTNLDGMITVQLPDVPANENIKGYYIIIVPLKKSRGKFIKPWESPDEMELDELLKEISRKRRSIRYGREVELKPYIAAHFDVLPTEFTLGDDKHYGGFTNKQLQSGQEYVFFVLAVMDHAESKMYATSPYSDPVVSMDLDPQPITDEEEGLIWVVGPVLAVVFIICIVIAILLYKRKRAESESRKSSLPNSKEVPSHHPTDPVELRRLNFQTPGMASHPPIPILELADHIERLKANDNLKFSQEYESIDPGQQFTWEHSNLEVNKPKNRYANVIAYDHSRVLLSAIEGIPGSDYVNANYIDGYRKQNAYIATQGSLPETFGDFWRMIWEQRSATVVMMTKLEERSRVKCDQYWPSRGTETHGLVQVTLLDTVELATYCVRTFALYKNGSSEKREVRQFQFTAWPDHGVPEHPTPFLAFLRRVKTCNPPDAGPMVVHCSAGVGRTGCFIVIDAMLERIKHEKTVDIYGHVTLMRAQRNYMVQTEDQYIFIHDALLEAVTCGNTEVPARNLYAYIQKLTQIETGENVTGMELEFKRLASSKAHTSRFISANLPCNKFKNRLVNIMPYESTRVCLQPIRGVEGSDYINASFLDGYRQQKAYIATQGPLAETTEDFWRMLWEHNSTIVVMLTKLREMGREKCHQYWPAERSARYQYFVVDPMAEYNMPQYILREFKVTDARDGQSRTVRQFQFTDWPEQGVPKSGEGFIDFIGQVHKTKEQFGQDGPISVHCSAGVGRTGVFITLSIVLERMRYEGVVDIFQTVKMLRTQRPAMVQTEDQYQFCYRAALEYLGSFDHYAT.

A signal peptide spans Met1 to Ala20. Residues Glu21–Gly1266 lie on the Extracellular side of the membrane. Ig-like C2-type domains are found at residues Pro24–Thr114 and Pro126–Tyr224. Disulfide bonds link Cys45-Cys98 and Cys147-Cys207. A mini-exon peptide A9; sufficient for interaction with IL1RAPL1 region spans residues Glu181–Arg189. Residues Glu227 to Glu230 form a mini-exon peptide B; required for interaction with SLITRK2 and in the function in pre-synaptic differentiation; Acts as an adjustable linker to control relative positions and orientations of the PTPRD second and third immunoglobilin domains for their simultaneous interactions with the first immunoglobilin domain of IL1RAPL1 and IL1RAP; Modulates affinity for IL1RAPL1 and IL1RAP region. The Ig-like C2-type 3 domain occupies Pro236–Thr318. N-linked (GlcNAc...) asparagine glycosylation is found at Asn254 and Asn299. A disulfide bond links Cys257 and Cys302. 8 consecutive Fibronectin type-III domains span residues Pro325 to Gln415, Ala420 to Pro516, Gln518 to Ser607, Pro612 to Asp709, Pro714 to Ala822, Val823 to Glu916, Phe921 to Val1016, and Phe1020 to Asp1106. Asn724 and Asn832 each carry an N-linked (GlcNAc...) asparagine glycan. Residues Leu1267 to Ile1287 form a helical membrane-spanning segment. Residues Leu1288–Thr1912 lie on the Cytoplasmic side of the membrane. The tract at residues Glu1298–Val1319 is disordered. Over residues Val1310 to Val1319 the composition is skewed to basic and acidic residues. Tyrosine-protein phosphatase domains lie at Phe1357 to Ala1612 and Met1644 to Tyr1903. Residues Asp1521, Cys1553–Arg1559, and Gln1597 each bind substrate. Catalysis depends on Cys1553, which acts as the Phosphocysteine intermediate. Cys1844 (phosphocysteine intermediate) is an active-site residue.

Belongs to the protein-tyrosine phosphatase family. Receptor class 2A subfamily. As to quaternary structure, interacts with PPFIA1, PPFIA2 and PPFIA3. Interacts (via extracellular domain) with SLITRK4 (via LRR 1 and 2 repeats). Interacts with SLITRK2; induces presynaptic differentiation. Interacts (via the second immunoglobilin domain) with IL1RAPL1 (via the first immunoglobilin domain); induces pre- and postsynaptic differentiation of neurons and synapse formation. Isoform G, isoform H, isoform I, isoform J, and isoform K do not interact with IL1RAPL1. Interacts (via the third immunoglobilin domain) with IL1RAP (via the first immunoglobilin domain); induces pre- and postsynaptic differentiation of neurons. Post-translationally, a cleavage occurs, separating the extracellular domain from the transmembrane segment. This process called 'ectodomain shedding' is thought to be involved in receptor desensitization, signal transduction and/or membrane localization. Brain, kidney, heart, and some B-cell lines.

It localises to the membrane. The enzyme catalyses O-phospho-L-tyrosyl-[protein] + H2O = L-tyrosyl-[protein] + phosphate. Functionally, can bidirectionally induce pre- and post-synaptic differentiation of neurons by mediating interaction with IL1RAP and IL1RAPL1 trans-synaptically. Involved in pre-synaptic differentiation through interaction with SLITRK2. This is Receptor-type tyrosine-protein phosphatase delta (Ptprd) from Mus musculus (Mouse).